Reading from the N-terminus, the 269-residue chain is Eukaryotic translation initiation factor 3 subunit G-1 (269 aa).

In terms of domain architecture, RRM spans alanine 188–proline 266. Serine 198 carries the post-translational modification Phosphoserine.

The protein belongs to the eIF-3 subunit G family. In terms of assembly, component of the eukaryotic translation initiation factor 3 (eIF-3) complex. The eIF-3 complex interacts with pix.

The protein resides in the cytoplasm. RNA-binding component of the eukaryotic translation initiation factor 3 (eIF-3) complex, which is involved in protein synthesis of a specialized repertoire of mRNAs and, together with other initiation factors, stimulates binding of mRNA and methionyl-tRNAi to the 40S ribosome. The eIF-3 complex specifically targets and initiates translation of a subset of mRNAs involved in cell proliferation. This subunit can bind 18S rRNA. The protein is Eukaryotic translation initiation factor 3 subunit G-1 of Drosophila melanogaster (Fruit fly).